The chain runs to 548 residues: Glucose-6-phosphate isomerase (548 aa).

The active-site Proton donor is the Glu355. Residues His386 and Lys514 contribute to the active site.

It belongs to the GPI family.

The protein localises to the cytoplasm. It catalyses the reaction alpha-D-glucose 6-phosphate = beta-D-fructose 6-phosphate. It participates in carbohydrate biosynthesis; gluconeogenesis. The protein operates within carbohydrate degradation; glycolysis; D-glyceraldehyde 3-phosphate and glycerone phosphate from D-glucose: step 2/4. Functionally, catalyzes the reversible isomerization of glucose-6-phosphate to fructose-6-phosphate. In Photorhabdus laumondii subsp. laumondii (strain DSM 15139 / CIP 105565 / TT01) (Photorhabdus luminescens subsp. laumondii), this protein is Glucose-6-phosphate isomerase.